The primary structure comprises 232 residues: Orotidine 5'-phosphate decarboxylase (232 aa).

Substrate contacts are provided by residues Asp-13, Lys-35, 62 to 71 (DLKFHDIPNT), Thr-122, Arg-182, Gln-191, Gly-211, and Arg-212. Catalysis depends on Lys-64, which acts as the Proton donor.

The protein belongs to the OMP decarboxylase family. Type 1 subfamily. In terms of assembly, homodimer.

It catalyses the reaction orotidine 5'-phosphate + H(+) = UMP + CO2. Its pathway is pyrimidine metabolism; UMP biosynthesis via de novo pathway; UMP from orotate: step 2/2. Functionally, catalyzes the decarboxylation of orotidine 5'-monophosphate (OMP) to uridine 5'-monophosphate (UMP). In Pseudomonas syringae pv. tomato (strain ATCC BAA-871 / DC3000), this protein is Orotidine 5'-phosphate decarboxylase.